We begin with the raw amino-acid sequence, 920 residues long: Phosphoenolpyruvate carboxylase (920 aa).

Active-site residues include His-138 and Lys-583.

Belongs to the PEPCase type 1 family. The cofactor is Mg(2+).

The catalysed reaction is oxaloacetate + phosphate = phosphoenolpyruvate + hydrogencarbonate. Its function is as follows. Forms oxaloacetate, a four-carbon dicarboxylic acid source for the tricarboxylic acid cycle. In Streptococcus pyogenes serotype M5 (strain Manfredo), this protein is Phosphoenolpyruvate carboxylase.